The sequence spans 145 residues: Histone H2B (145 aa).

Residues 1-52 (MAPKAAAGKKPAEKKPVEEKKAEEVPAEKKPKAGKKLPKDAGRPDKKKKRAK) are disordered. N6-acetyllysine is present on residues lysine 9, lysine 35, and lysine 36. Positions 10 to 44 (KPAEKKPVEEKKAEEVPAEKKPKAGKKLPKDAGRP) are enriched in basic and acidic residues. Lysine 141 is covalently cross-linked (Glycyl lysine isopeptide (Lys-Gly) (interchain with G-Cter in ubiquitin)).

Belongs to the histone H2B family. In terms of assembly, the nucleosome is a histone octamer containing two molecules each of H2A, H2B, H3 and H4 assembled in one H3-H4 heterotetramer and two H2A-H2B heterodimers. The octamer wraps approximately 147 bp of DNA. Post-translationally, can be acetylated to form H2BK6ac, H2BK33ac and H2BK34ac. Monoubiquitinated to form H2BK143ub1; may give a specific tag for epigenetic transcriptional activation. As to expression, in anthers, floral buds, pollen, petals and fruits.

It localises to the nucleus. Its subcellular location is the chromosome. Functionally, core component of nucleosome. Nucleosomes wrap and compact DNA into chromatin, limiting DNA accessibility to the cellular machineries which require DNA as a template. Histones thereby play a central role in transcription regulation, DNA repair, DNA replication and chromosomal stability. DNA accessibility is regulated via a complex set of post-translational modifications of histones, also called histone code, and nucleosome remodeling. The polypeptide is Histone H2B (HIS2B) (Capsicum annuum (Capsicum pepper)).